A 224-amino-acid polypeptide reads, in one-letter code: Ribonuclease 3 (224 aa).

One can recognise an RNase III domain in the interval 5-127 (ANRLQRRLGY…IIGAIYLDSD (123 aa)). Glu40 contacts Mg(2+). The active site involves Asp44. Residues Asp113 and Glu116 each contribute to the Mg(2+) site. Glu116 is a catalytic residue. The 71-residue stretch at 154-224 (DPKTRLQECL…AELALKQLES (71 aa)) folds into the DRBM domain.

This sequence belongs to the ribonuclease III family. In terms of assembly, homodimer. Mg(2+) serves as cofactor.

Its subcellular location is the cytoplasm. It catalyses the reaction Endonucleolytic cleavage to 5'-phosphomonoester.. Functionally, digests double-stranded RNA. Involved in the processing of primary rRNA transcript to yield the immediate precursors to the large and small rRNAs (23S and 16S). Processes some mRNAs, and tRNAs when they are encoded in the rRNA operon. Processes pre-crRNA and tracrRNA of type II CRISPR loci if present in the organism. The protein is Ribonuclease 3 of Photobacterium profundum (strain SS9).